We begin with the raw amino-acid sequence, 285 residues long: Phosphatidylglycerol--prolipoprotein diacylglyceryl transferase (285 aa).

The next 4 helical transmembrane spans lie at 26-46, 71-91, 107-127, and 133-153; these read IALH…WWYV, FVVW…VLIW, WDGG…IIWF, and INIW…IGVV. Residue arginine 154 participates in a 1,2-diacyl-sn-glycero-3-phospho-(1'-sn-glycerol) binding. Helical transmembrane passes span 194–214, 218–238, and 256–276; these read LMEG…FKAF, GTVA…SEIF, and GFTY…YAIF.

This sequence belongs to the Lgt family.

The protein localises to the cell inner membrane. The enzyme catalyses L-cysteinyl-[prolipoprotein] + a 1,2-diacyl-sn-glycero-3-phospho-(1'-sn-glycerol) = an S-1,2-diacyl-sn-glyceryl-L-cysteinyl-[prolipoprotein] + sn-glycerol 1-phosphate + H(+). It participates in protein modification; lipoprotein biosynthesis (diacylglyceryl transfer). Its function is as follows. Catalyzes the transfer of the diacylglyceryl group from phosphatidylglycerol to the sulfhydryl group of the N-terminal cysteine of a prolipoprotein, the first step in the formation of mature lipoproteins. This chain is Phosphatidylglycerol--prolipoprotein diacylglyceryl transferase, found in Bartonella bacilliformis (strain ATCC 35685 / KC583 / Herrer 020/F12,63).